Reading from the N-terminus, the 387-residue chain is MQTGHPADGVYFGLMSGTSMDGVDGVAVRFEAGKPPAVLSEAFVGFADTLRDALFALQQPGGDEIEREALAANALAARYAVCCHELLRTAGLLPDDVRALGVHGQTVRHRPERGYTRQLNNAALLAELTRIDVIADFRSRDVAAGGQGAPLVPAFHATVFGSPDETRVVCNLGGISNITILPAGGGPQGEGHARNDTVRGHDCGPANALIDAWVERHLKQPFDDGGRFAARGKVDETLLAALLDEPYFRQNAPKSTGRDLFNADWLDAKLAGFQHLAPENVQATLTALTAATVADEIARHAGDCRAVYVCGGGARNPVLLDALATALAARGLDAAVATTAALGVPPQQVESLAFAWLAYRFNARAPGNVSTVTGAAGERVLGALYPR.

17-24 contacts ATP; the sequence is GTSMDGVD.

Belongs to the anhydro-N-acetylmuramic acid kinase family.

It catalyses the reaction 1,6-anhydro-N-acetyl-beta-muramate + ATP + H2O = N-acetyl-D-muramate 6-phosphate + ADP + H(+). Its pathway is amino-sugar metabolism; 1,6-anhydro-N-acetylmuramate degradation. The protein operates within cell wall biogenesis; peptidoglycan recycling. Functionally, catalyzes the specific phosphorylation of 1,6-anhydro-N-acetylmuramic acid (anhMurNAc) with the simultaneous cleavage of the 1,6-anhydro ring, generating MurNAc-6-P. Is required for the utilization of anhMurNAc either imported from the medium or derived from its own cell wall murein, and thus plays a role in cell wall recycling. In Burkholderia mallei (strain ATCC 23344), this protein is Anhydro-N-acetylmuramic acid kinase.